Reading from the N-terminus, the 430-residue chain is Serine/threonine-protein kinase Sgk1 (430 aa).

The segment at 1-60 is necessary for localization to the mitochondria; that stretch reads MTVKTEAARSTLTYSRMRGMVAILIAFMKQRRMGLNDFIQKLANNSYACKHPEVQSYLKI. A disordered region spans residues 66-92; the sequence is PELMNANPSPPPSPSQQINLGPSSNPH. Phosphoserine is present on S74. At S78 the chain carries Phosphoserine; by MAPK7. Polar residues predominate over residues 81–91; sequence QQINLGPSSNP. The region spanning 98–354 is the Protein kinase domain; that stretch reads FHFLKVIGKG…FMEIKSHIFF (257 aa). ATP contacts are provided by residues 104 to 112 and K127; that span reads IGKGSFGKV. The short motif at 131 to 141 is the Nuclear localization signal element; the sequence is KKAILKKKEEK. Catalysis depends on D222, which acts as the Proton acceptor. The residue at position 256 (T256) is a Phosphothreonine; by PDPK1. Residues 355–430 enclose the AGC-kinase C-terminal domain; that stretch reads SLINWDDLIN…SYAPPMDSFL (76 aa). The residue at position 368 (T368) is a Phosphothreonine; by PKA. S396, S400, and S421 each carry phosphoserine.

Belongs to the protein kinase superfamily. AGC Ser/Thr protein kinase family. As to quaternary structure, homodimer; disulfide-linked. Forms a trimeric complex with FBXW7 and NOTCH1. Interacts with MAPK3/ERK1, MAPK1/ERK2, MAP2K1/MEK1, MAP2K2/MEK2, NEDD4, NEDD4L, MAPK7, CREB1, SLC9A3R2/NHERF2 and KCNJ1/ROMK1. Associates with the mammalian target of rapamycin complex 2 (mTORC2) via an interaction with MAPKAP1/SIN1. Interacts with MAPT/TAU. In terms of processing, regulated by phosphorylation. Activated by phosphorylation on Ser-421 by mTORC2, transforming it into a substrate for PDPK1 which phosphorylates it on Thr-256. Phosphorylation on Ser-396 and Ser-400 are also essential for its activity. Phosphorylation on Ser-78 by MAPK7 is required for growth factor-induced cell cycle progression. Ubiquitinated by NEDD4L; which promotes proteasomal degradation. Ubiquitinated by SYVN1 at the endoplasmic reticulum; which promotes rapid proteasomal degradation and maintains a high turnover rate in resting cells. In terms of tissue distribution, expressed in most tissues with highest levels in the ovary, thymus and lung. In the kidney, expressed within glomeruli of the cortex, at low levels in outer medulla and moderate levels in inner medulla and papilla.

The protein localises to the cytoplasm. It localises to the nucleus. Its subcellular location is the endoplasmic reticulum membrane. The protein resides in the cell membrane. It is found in the mitochondrion. The enzyme catalyses L-seryl-[protein] + ATP = O-phospho-L-seryl-[protein] + ADP + H(+). It carries out the reaction L-threonyl-[protein] + ATP = O-phospho-L-threonyl-[protein] + ADP + H(+). Its activity is regulated as follows. Two specific sites, one in the kinase domain (Thr-256) and the other in the C-terminal regulatory region (Ser-421), need to be phosphorylated for its full activation. Phosphorylation at Ser-396 and Ser-400 are also essential for its activity. Activated by WNK1, WNK2, WNK3 and WNK4. Functionally, serine/threonine-protein kinase which is involved in the regulation of a wide variety of ion channels, membrane transporters, cellular enzymes, transcription factors, neuronal excitability, cell growth, proliferation, survival, migration and apoptosis. Plays an important role in cellular stress response. Contributes to regulation of renal Na(+) retention, renal K(+) elimination, salt appetite, gastric acid secretion, intestinal Na(+)/H(+) exchange and nutrient transport, insulin-dependent salt sensitivity of blood pressure, salt sensitivity of peripheral glucose uptake, cardiac repolarization and memory consolidation. Up-regulates Na(+) channels: SCNN1A/ENAC, SCN5A and ASIC1/ACCN2, K(+) channels: KCNJ1/ROMK1, KCNA1-5, KCNQ1-5 and KCNE1, epithelial Ca(2+) channels: TRPV5 and TRPV6, chloride channels: BSND, CLCN2 and CFTR, glutamate transporters: SLC1A3/EAAT1, SLC1A2 /EAAT2, SLC1A1/EAAT3, SLC1A6/EAAT4 and SLC1A7/EAAT5, amino acid transporters: SLC1A5/ASCT2, SLC38A1/SN1 and SLC6A19, creatine transporter: SLC6A8, Na(+)/dicarboxylate cotransporter: SLC13A2/NADC1, Na(+)-dependent phosphate cotransporter: SLC34A2/NAPI-2B, glutamate receptor: GRIK2/GLUR6. Up-regulates carriers: SLC9A3/NHE3, SLC12A1/NKCC2, SLC12A3/NCC, SLC5A3/SMIT, SLC2A1/GLUT1, SLC5A1/SGLT1 and SLC15A2/PEPT2. Regulates enzymes: GSK3A/B, PMM2 and Na(+)/K(+) ATPase, and transcription factors: CTNNB1 and nuclear factor NF-kappa-B. Stimulates sodium transport into epithelial cells by enhancing the stability and expression of SCNN1A/ENAC. This is achieved by phosphorylating the NEDD4L ubiquitin E3 ligase, promoting its interaction with 14-3-3 proteins, thereby preventing it from binding to SCNN1A/ENAC and targeting it for degradation. Regulates store-operated Ca(+2) entry (SOCE) by stimulating ORAI1 and STIM1. Regulates KCNJ1/ROMK1 directly via its phosphorylation or indirectly via increased interaction with SLC9A3R2/NHERF2. Phosphorylates MDM2 and activates MDM2-dependent ubiquitination of p53/TP53. Phosphorylates SLC2A4/GLUT4 and up-regulates its activity. Phosphorylates APBB1/FE65 and promotes its localization to the nucleus. Phosphorylates FBXW7 and plays an inhibitory role in the NOTCH1 signaling. Phosphorylates FOXO1 resulting in its relocalization from the nucleus to the cytoplasm. Phosphorylates FOXO3, promoting its exit from the nucleus and interference with FOXO3-dependent transcription. Phosphorylates BRAF and MAP3K3/MEKK3 and inhibits their activity. Phosphorylates SLC9A3/NHE3 in response to dexamethasone, resulting in its activation and increased localization at the cell membrane. Phosphorylates CREB1. Necessary for vascular remodeling during angiogenesis. Phosphorylates MAPT/TAU and mediates microtubule depolymerization and neurite formation in hippocampal neurons. Phosphorylates MAPK1/ERK2 and activates it by enhancing its interaction with MAP2K1/MEK1 and MAP2K2/MEK2. May also play an important role in the development of particular groups of neurons in the postnatal brain. This is Serine/threonine-protein kinase Sgk1 (Sgk1) from Rattus norvegicus (Rat).